Here is a 520-residue protein sequence, read N- to C-terminus: Developmental regulatory protein wetA (520 aa).

3 stretches are compositionally biased toward polar residues: residues 109–118 (TATHALSISP), 155–165 (QSFSPSLMRSS), and 378–392 (SSQK…SQVH). Disordered regions lie at residues 109–165 (TATH…MRSS), 378–454 (SSQK…SNKS), and 468–496 (KKIL…RRRK). Residues 420–429 (PTHRRTHSRK) show a composition bias toward basic residues. A compositionally biased stretch (low complexity) spans 445–454 (SSSSRGSNKS).

This sequence belongs to the wetA family.

Functionally, brlA, abaA and wetA are pivotal regulators of conidiophore development and conidium maturation. They act individually and together to regulate their own expression and that of numerous other sporulation-specific genes. This chain is Developmental regulatory protein wetA, found in Penicillium roqueforti (strain FM164).